Consider the following 462-residue polypeptide: Serine--tRNA ligase, cytoplasmic (462 aa).

Lys241 is covalently cross-linked (Glycyl lysine isopeptide (Lys-Gly) (interchain with G-Cter in URM1)). Position 246–248 (246–248 (TSE)) interacts with L-serine. ATP is bound by residues 279–281 (RRE) and Val295. Position 302 (Glu302) interacts with L-serine. Residues Lys350 and Lys351 each participate in a glycyl lysine isopeptide (Lys-Gly) (interchain with G-Cter in URM1) cross-link. Residue 366–369 (ELVS) participates in ATP binding. 2 positions are modified to cysteine persulfide: Cys373 and Cys400. Residue Thr404 participates in L-serine binding.

This sequence belongs to the class-II aminoacyl-tRNA synthetase family. Type-1 seryl-tRNA synthetase subfamily. In terms of assembly, homodimer; the tRNA molecule probably binds across the dimer. Interacts with ABP140; interaction is required for the tRNA N(3)-methylcytidine methyltransferase activity of ABP140. In terms of processing, conjugated to URM1, a ubiquitin-like protein, in response to oxidative stresses. The attachment of URM1 to lysine residues exclusively depends on the presence of a peroxidatic cysteine in the target protein, with low specificity for the particular residue, motif, or structural context at which urmylation can occur. The URM1-conjugation reaction is mechanistically and directly coupled to the process of cysteine persulfidation, transfering the sulfur atom of the URM1 thiocarboxyl group to redox-active cysteine residues in the target protein if it is exposed to oxidative conditions. Persulfidated on specific redox-active cysteine residues. Persulfidation (also called protein S-sulfhydration) may provide a molecular mechanism that enables cells to protect vulnerable cysteine residues from reactive oxygen species (ROS) under stress conditions.

The protein localises to the cytoplasm. It localises to the cytosol. It catalyses the reaction tRNA(Ser) + L-serine + ATP = L-seryl-tRNA(Ser) + AMP + diphosphate + H(+). Functionally, catalyzes the attachment of serine to tRNA(Ser) in a two-step reaction: serine is first activated by ATP to form Ser-AMP and then transferred to the acceptor end of tRNA(Ser). The chain is Serine--tRNA ligase, cytoplasmic (SES1) from Saccharomyces cerevisiae (strain ATCC 204508 / S288c) (Baker's yeast).